Consider the following 198-residue polypeptide: Recombination protein RecR (198 aa).

A C4-type zinc finger spans residues 57-72 (CSICGRLTDDDPCSIC). One can recognise a Toprim domain in the interval 80–175 (TTILVLEDSR…KVTRLARGLA (96 aa)).

It belongs to the RecR family.

In terms of biological role, may play a role in DNA repair. It seems to be involved in an RecBC-independent recombinational process of DNA repair. It may act with RecF and RecO. The sequence is that of Recombination protein RecR from Streptococcus pneumoniae serotype 2 (strain D39 / NCTC 7466).